The sequence spans 470 residues: AAA-ATPase At5g40000 (470 aa).

An N-terminal signal peptide occupies residues 1–30; that stretch reads MMMMGDSFGSIGSSMASLFFLWATIQQIFP. 248–255 lines the ATP pocket; sequence GPPGTGKS.

It belongs to the AAA ATPase family. BCS1 subfamily. Mg(2+) is required as a cofactor.

The catalysed reaction is ATP + H2O = ADP + phosphate + H(+). The sequence is that of AAA-ATPase At5g40000 from Arabidopsis thaliana (Mouse-ear cress).